The following is a 225-amino-acid chain: Ribose-5-phosphate isomerase A (225 aa).

Residues 33-36 (TGST), 84-87 (DGAD), and 96-99 (KGGG) contribute to the substrate site. Glu-105 functions as the Proton acceptor in the catalytic mechanism. Residue Lys-123 participates in substrate binding.

The protein belongs to the ribose 5-phosphate isomerase family. As to quaternary structure, homodimer.

It catalyses the reaction aldehydo-D-ribose 5-phosphate = D-ribulose 5-phosphate. It participates in carbohydrate degradation; pentose phosphate pathway; D-ribose 5-phosphate from D-ribulose 5-phosphate (non-oxidative stage): step 1/1. Catalyzes the reversible conversion of ribose-5-phosphate to ribulose 5-phosphate. The sequence is that of Ribose-5-phosphate isomerase A from Halobacterium salinarum (strain ATCC 29341 / DSM 671 / R1).